We begin with the raw amino-acid sequence, 1620 residues long: ALK tyrosine kinase receptor (1620 aa).

Positions 1 to 18 (MGAIGLLWLLPLLLSTAA) are cleaved as a signal peptide. Topologically, residues 19-1038 (VGSGMGTGQR…PHLPLSLILS (1020 aa)) are extracellular. The heparin-binding region stretch occupies residues 48–70 (RLQRKSLAVDFVVPSLFRVYARD). 10 N-linked (GlcNAc...) asparagine glycosylation sites follow: asparagine 169, asparagine 244, asparagine 285, asparagine 324, asparagine 411, asparagine 424, asparagine 445, asparagine 563, asparagine 571, and asparagine 627. Residues 264-427 (LECSFDFPCE…DFFALKNCSE (164 aa)) form the MAM 1 domain. An LDL-receptor class A domain is found at 437–473 (LQSSFTCWNGTVLQLGQACDFHQDCAQGEDESQMCRK). The 159-residue stretch at 478–636 (FYCNFEDGFC…NISISLDCYL (159 aa)) folds into the MAM 2 domain. The disordered stretch occupies residues 650-674 (PKSRNLFERNPNKELKPGENSPRQT). The span at 654–666 (NLFERNPNKELKP) shows a compositional bias: basic and acidic residues. The cysteines at positions 688 and 701 are disulfide-linked. Asparagine 709 is a glycosylation site (N-linked (GlcNAc...) asparagine). Cysteine 783 and cysteine 794 are disulfide-bonded. N-linked (GlcNAc...) asparagine glycans are attached at residues asparagine 808, asparagine 863, asparagine 864, and asparagine 886. A disulfide bridge connects residues cysteine 906 and cysteine 928. N-linked (GlcNAc...) asparagine glycosylation occurs at asparagine 986. 3 disulfides stabilise this stretch: cysteine 987-cysteine 995, cysteine 990-cysteine 1006, and cysteine 1008-cysteine 1021. Residues 987-1025 (CSHCEVDECHMDPESHKVICFCDHGTVLAEDGVSCIVSP) are EGF-like. Residues 1039-1059 (VVTSALVAALVLAFSGIMIVY) traverse the membrane as a helical segment. Topologically, residues 1060-1620 (RRKHQELQAM…SKNSMNQPGP (561 aa)) are cytoplasmic. Phosphotyrosine occurs at positions 1078, 1092, and 1096. In terms of domain architecture, Protein kinase spans 1116 to 1392 (ITLIRGLGHG…IEYCTQDPDV (277 aa)). Histidine 1124 lines the ATP pocket. Residue tyrosine 1131 is modified to Phosphotyrosine. ATP-binding positions include lysine 1150 and 1197 to 1199 (ELM). Aspartate 1249 functions as the Proton acceptor in the catalytic mechanism. Aspartate 1270 is a binding site for ATP. Tyrosine 1278 is modified (phosphotyrosine). The tract at residues 1408-1463 (EEKVPVRPKDPEGVPPLLVSQQAKREEERSPAAPPPLPTTSSGKAAKKPTAAEISV) is disordered. Residues 1410-1419 (KVPVRPKDPE) show a composition bias toward basic and acidic residues. Tyrosine 1507 bears the Phosphotyrosine mark. Residues 1514–1540 (KPTKKNNPIAKKEPHDRGNLGLEGSCT) are disordered. A Phosphotyrosine modification is found at tyrosine 1604.

This sequence belongs to the protein kinase superfamily. Tyr protein kinase family. Insulin receptor subfamily. As to quaternary structure, homodimer; homodimerizes following heparin- and ligand-binding. Interacts with CBL, IRS1, PIK3R1 and PLCG1. Interacts with FRS2 and SHC1. Interacts with PTN and MDK. Post-translationally, phosphorylated at tyrosine residues by autocatalysis, which activates kinase activity. In cells not stimulated by a ligand, receptor protein tyrosine phosphatase beta and zeta complex (PTPRB/PTPRZ1) dephosphorylates ALK at the sites in ALK that are undergoing autophosphorylation through autoactivation. Phosphorylation at Tyr-1507 is critical for SHC1 association. In terms of processing, N-glycosylated. As to expression, expressed in brain and CNS. Also expressed in the small intestine and testis, but not in normal lymphoid cells.

The protein resides in the cell membrane. The catalysed reaction is L-tyrosyl-[protein] + ATP = O-phospho-L-tyrosyl-[protein] + ADP + H(+). Activated upon ALKAL2 ligand-binding. ALKAL2-driven activation is coupled with heparin-binding. Following ligand-binding, homodimerizes and autophosphorylates, activating its kinase activity. Inactivated through dephosphorylation by receptor protein tyrosine phosphatase beta and zeta complex (PTPRB/PTPRZ1) when there is no stimulation by a ligand. Staurosporine, crizotinib and CH5424802 act as inhibitors of ALK kinase activity. In terms of biological role, neuronal receptor tyrosine kinase that is essentially and transiently expressed in specific regions of the central and peripheral nervous systems and plays an important role in the genesis and differentiation of the nervous system. Also acts as a key thinness protein involved in the resistance to weight gain: in hypothalamic neurons, controls energy expenditure acting as a negative regulator of white adipose tissue lipolysis and sympathetic tone to fine-tune energy homeostasis. Following activation by ALKAL2 ligand at the cell surface, transduces an extracellular signal into an intracellular response. In contrast, ALKAL1 is not a potent physiological ligand for ALK. Ligand-binding to the extracellular domain induces tyrosine kinase activation, leading to activation of the mitogen-activated protein kinase (MAPK) pathway. Phosphorylates almost exclusively at the first tyrosine of the Y-x-x-x-Y-Y motif. Induces tyrosine phosphorylation of CBL, FRS2, IRS1 and SHC1, as well as of the MAP kinases MAPK1/ERK2 and MAPK3/ERK1. ALK activation may also be regulated by pleiotrophin (PTN) and midkine (MDK). PTN-binding induces MAPK pathway activation, which is important for the anti-apoptotic signaling of PTN and regulation of cell proliferation. MDK-binding induces phosphorylation of the ALK target insulin receptor substrate (IRS1), activates mitogen-activated protein kinases (MAPKs) and PI3-kinase, resulting also in cell proliferation induction. Drives NF-kappa-B activation, probably through IRS1 and the activation of the AKT serine/threonine kinase. Recruitment of IRS1 to activated ALK and the activation of NF-kappa-B are essential for the autocrine growth and survival signaling of MDK. In Homo sapiens (Human), this protein is ALK tyrosine kinase receptor.